We begin with the raw amino-acid sequence, 627 residues long: tRNA uridine 5-carboxymethylaminomethyl modification enzyme MnmG (627 aa).

FAD is bound by residues 13–18 (GGGHAG), valine 125, and serine 180. 274–288 (GPRYCPSIEDKVVRF) contributes to the NAD(+) binding site. Glutamine 371 provides a ligand contact to FAD.

Belongs to the MnmG family. As to quaternary structure, homodimer. Heterotetramer of two MnmE and two MnmG subunits. FAD is required as a cofactor.

It is found in the cytoplasm. In terms of biological role, NAD-binding protein involved in the addition of a carboxymethylaminomethyl (cmnm) group at the wobble position (U34) of certain tRNAs, forming tRNA-cmnm(5)s(2)U34. The protein is tRNA uridine 5-carboxymethylaminomethyl modification enzyme MnmG of Francisella tularensis subsp. tularensis (strain FSC 198).